The primary structure comprises 354 residues: MLKNDRLLRALNRQPVDRTPVWLMRQAGRYLPEYRATRARAGSFLGMAKNPDIACEVTLQPLQRFPLDAAILFSDILTIPDAMGLELYFVEGEGPKFRHPVRDAAAIHRLGVPDMETELRYVMDAVRVIRRELDGSVPLIGFSGSPWTLACYMIEGGGSKEYARIKAMAFNAPELLHHLLNTVTDAVIAYLAAQRAAGAQALQVFDTWGGVLSPAMYREFSLPYLTRIARELERGDGAERTPLVLFGKGNGAYVADLAASGAEAVGVDWTISLADAAQRAGGRVALQGNLDPATLYGSPEAIRAEVGKTLDSYAQGNGGSREGHVFNLGHGMSPDMNPEHVGVLVEAVQTLSKR.

Substrate is bound by residues 25–29 (RQAGR), Phe-44, Asp-75, Tyr-152, Thr-207, and His-330.

Belongs to the uroporphyrinogen decarboxylase family. Homodimer.

The protein resides in the cytoplasm. The enzyme catalyses uroporphyrinogen III + 4 H(+) = coproporphyrinogen III + 4 CO2. The protein operates within porphyrin-containing compound metabolism; protoporphyrin-IX biosynthesis; coproporphyrinogen-III from 5-aminolevulinate: step 4/4. Its function is as follows. Catalyzes the decarboxylation of four acetate groups of uroporphyrinogen-III to yield coproporphyrinogen-III. The sequence is that of Uroporphyrinogen decarboxylase from Xanthomonas axonopodis pv. citri (strain 306).